Here is a 425-residue protein sequence, read N- to C-terminus: E3 ubiquitin-protein ligase CBLL2 (425 aa).

The RING-type zinc finger occupies 57–97; that stretch reads CDKCDLPIKIYGRIIPCKHAFCYHCANLYDKVGYKVCPRCR. Residues 96–154 are HYB domain; sequence CRYPVLRIEAHKRGSVFMCSIVQQCKRTYLSQKSLQAHIKRRHKRARKQVTSASLEKVR. The segment at 112–138 adopts a C2H2-type zinc-finger fold; it reads FMCSIVQQCKRTYLSQKSLQAHIKRRH. 2 disordered regions span residues 241–297 and 382–425; these read DHIQ…HQMP and TDAM…HRRY. Pro residues predominate over residues 398–408; that stretch reads PCPPTRSPPPS. Basic residues predominate over residues 412–425; it reads GRSHHSHQRRHRRY.

Homodimer. Exclusively expressed in testis and sperm, including spermatocytes, round and elongated spermatids, and Leydig cells.

The protein localises to the cytoplasm. It carries out the reaction S-ubiquitinyl-[E2 ubiquitin-conjugating enzyme]-L-cysteine + [acceptor protein]-L-lysine = [E2 ubiquitin-conjugating enzyme]-L-cysteine + N(6)-ubiquitinyl-[acceptor protein]-L-lysine.. It participates in protein modification; protein ubiquitination. Functionally, E3 ubiquitin ligase catalyzing the covalent attachment of ubiquitin moieties onto substrate proteins. May operate on tyrosine-phosphorylated SRC substrates. In Homo sapiens (Human), this protein is E3 ubiquitin-protein ligase CBLL2.